The sequence spans 510 residues: 2-isopropylmalate synthase (510 aa).

One can recognise a Pyruvate carboxyltransferase domain in the interval 5–267 (LIIFDTTLRD…DTRIDSVHIV (263 aa)). Mn(2+) contacts are provided by Asp14, His202, His204, and Asn238. Residues 392 to 510 (KLLSLTAHSE…SKLERAHPQV (119 aa)) are regulatory domain.

This sequence belongs to the alpha-IPM synthase/homocitrate synthase family. LeuA type 1 subfamily. Homodimer. Mn(2+) is required as a cofactor.

It is found in the cytoplasm. The catalysed reaction is 3-methyl-2-oxobutanoate + acetyl-CoA + H2O = (2S)-2-isopropylmalate + CoA + H(+). It participates in amino-acid biosynthesis; L-leucine biosynthesis; L-leucine from 3-methyl-2-oxobutanoate: step 1/4. Its function is as follows. Catalyzes the condensation of the acetyl group of acetyl-CoA with 3-methyl-2-oxobutanoate (2-ketoisovalerate) to form 3-carboxy-3-hydroxy-4-methylpentanoate (2-isopropylmalate). This chain is 2-isopropylmalate synthase, found in Nitrosospira multiformis (strain ATCC 25196 / NCIMB 11849 / C 71).